The chain runs to 292 residues: Mitochondrial fission regulator 1-like (292 aa).

Thr-30 bears the Phosphothreonine mark. Ser-41 is modified (phosphoserine). The residue at position 103 (Ser-103) is a Phosphoserine; by AMPK. 3 positions are modified to phosphoserine: Ser-110, Ser-224, and Ser-225. Position 238 is a phosphoserine; by AMPK (Ser-238). 2 positions are modified to phosphoserine: Ser-261 and Ser-273.

The protein belongs to the MTFR1 family. In terms of processing, phosphorylated by AMPK. Upon stress, phosphorylation at Ser-103 and Ser-238 by AMPK is sufficient to induce mitochondrial fragmentation.

It is found in the mitochondrion outer membrane. Mitochondrial protein required for adaptation of miochondrial dynamics to metabolic changes. Regulates mitochondrial morphology at steady state and mediates AMPK-dependent stress-induced mitochondrial fragmentation via the control of OPA1 levels. The chain is Mitochondrial fission regulator 1-like from Homo sapiens (Human).